A 252-amino-acid polypeptide reads, in one-letter code: 3-dehydroquinate dehydratase (252 aa).

3-dehydroquinate contacts are provided by residues Ser21, 46 to 48 (EWR), and Arg82. His143 acts as the Proton donor/acceptor in catalysis. Lys170 (schiff-base intermediate with substrate) is an active-site residue. Positions 213, 232, and 236 each coordinate 3-dehydroquinate.

This sequence belongs to the type-I 3-dehydroquinase family. As to quaternary structure, homodimer.

The catalysed reaction is 3-dehydroquinate = 3-dehydroshikimate + H2O. It functions in the pathway metabolic intermediate biosynthesis; chorismate biosynthesis; chorismate from D-erythrose 4-phosphate and phosphoenolpyruvate: step 3/7. Functionally, involved in the third step of the chorismate pathway, which leads to the biosynthesis of aromatic amino acids. Catalyzes the cis-dehydration of 3-dehydroquinate (DHQ) and introduces the first double bond of the aromatic ring to yield 3-dehydroshikimate. In Escherichia coli O17:K52:H18 (strain UMN026 / ExPEC), this protein is 3-dehydroquinate dehydratase.